Consider the following 841-residue polypeptide: Toll-like receptor 4 (841 aa).

Residues 1 to 23 form the signal peptide; that stretch reads MMARVRLAAALIPATAILSCLRT. At 24–632 the chain is on the extracellular side; the sequence is ESWDPCVQVV…FRNATCQMSK (609 aa). Cysteine 29 and cysteine 40 form a disulfide bridge. Asparagine 35 and asparagine 73 each carry an N-linked (GlcNAc...) asparagine glycan. 7 LRR repeats span residues 55–76, 79–100, 103–124, 127–148, 151–172, 176–197, and 205–225; these read STKM…NFSS, ELQV…TFQG, HLST…AFSG, SLQK…PIGH, TLKE…EYFS, NLEH…DVKV, and NLSL…TFKE. 4 N-linked (GlcNAc...) asparagine glycosylation sites follow: asparagine 205, asparagine 238, asparagine 282, and asparagine 309. The cysteines at positions 281 and 306 are disulfide-linked. LRR repeat units follow at residues 352 to 373, 374 to 395, 400 to 422, 423 to 444, 448 to 469, 472 to 495, 497 to 518, 521 to 542, and 545 to 568; these read SLKK…FQLP, SLQY…SHAD, NLKH…MGLE, KLEH…SVFL, NLRY…IFTG, SLKT…FTEL, NLTV…AFHS, SLQV…LYEP, and LLRI…QNLP. A disulfide bridge connects residues cysteine 390 and cysteine 391. Asparagine 497 and asparagine 526 each carry an N-linked (GlcNAc...) asparagine glycan. N-linked (GlcNAc...) asparagine glycans are attached at residues asparagine 570 and asparagine 575. In terms of domain architecture, LRRCT spans 579–630; that stretch reads NAFACVCEHQRFLQWVKDQRQLLVGAEQMMCAEPLDMKDMPVLSFRNATCQM. Intrachain disulfides connect cysteine 583–cysteine 609 and cysteine 585–cysteine 628. Asparagine 625 carries an N-linked (GlcNAc...) asparagine glycan. A helical membrane pass occupies residues 633 to 653; it reads MIISVSVVTVLLVSVVGVLVY. Residues 654 to 841 are Cytoplasmic-facing; the sequence is KFYFHLMLLA…TNPQEATTST (188 aa). In terms of domain architecture, TIR spans 673–816; the sequence is STYGAFVIYS…VFWRRLRKAL (144 aa). The segment at 820 to 841 is disordered; the sequence is KPQSPEGTADAETNPQEATTST. Over residues 830 to 841 the composition is skewed to polar residues; the sequence is AETNPQEATTST.

The protein belongs to the Toll-like receptor family. In terms of assembly, belongs to the lipopolysaccharide (LPS) receptor, a multi-protein complex containing at least CD14, LY96 and TLR4. Binding to bacterial LPS leads to homodimerization. Interacts with LY96 via the extracellular domain. Interacts with MYD88 and TIRAP via their respective TIR domains. Interacts with TICAM2. Interacts with NOX4. Interacts with CNPY3 and HSP90B1; this interaction is required for proper folding in the endoplasmic reticulum. Interacts with MAP3K21; this interaction leads to negative regulation of TLR4 signaling. Interacts with CD36, following CD36 stimulation by oxLDL or amyloid-beta 42, and forms a heterodimer with TLR6. The trimeric complex is internalized and triggers inflammatory response. LYN kinase activity facilitates TLR4-TLR6 heterodimerization and signal initiation. Interacts with TICAM1 in response to LPS in a WDFY1-dependent manner. Interacts with WDFY1 in response to LPS. Interacts with SMPDL3B. Interacts with CEACAM1; upon lipopolysaccharide stimulation, forms a complex including TLR4 and the phosphorylated form of SYK and CEACAM1, which in turn, recruits PTPN6 that dephosphorylates SYK, reducing the production of reactive oxygen species (ROS) and lysosome disruption, which in turn, reduces the activity of the inflammasome. Interacts with RFTN1; the interaction occurs in response to lipopolysaccharide stimulation. Interacts with SCIMP; the interaction occurs in response to lipopolysaccharide stimulation and is enhanced by phosphorylation of SCIMP by LYN. This interaction facilitates the phosphorylation of TLR4 by LYN which elicits a selective cytokine response in macrophages. Interacts with TRAF3IP3. Interacts with TREM1; this interaction enhances TLR4-mediated inflammatory response. Interacts with ZG16B/PAUF. Interacts with CD82; this interaction inhibits TLR4-mediated signaling pathway. In terms of processing, phosphorylated on tyrosine residues by LYN after binding lipopolysaccharide. Post-translationally, ubiquitinated by RNF128 via 'Lys-28'-linked polyubiquitin chains, leading to proteasomal degradation.

Its subcellular location is the cell membrane. The protein resides in the early endosome. The protein localises to the cell projection. It localises to the ruffle. Transmembrane receptor that functions as a pattern recognition receptor recognizing pathogen- and damage-associated molecular patterns (PAMPs and DAMPs) to induce innate immune responses via downstream signaling pathways. At the plasma membrane, cooperates with LY96 to mediate the innate immune response to bacterial lipopolysaccharide (LPS). Also involved in LPS-independent inflammatory responses triggered by free fatty acids, such as palmitate, and Ni(2+). Mechanistically, acts via MYD88, TIRAP and TRAF6, leading to NF-kappa-B activation, cytokine secretion and the inflammatory response. Alternatively, CD14-mediated TLR4 internalization via endocytosis is associated with the initiation of a MYD88-independent signaling via the TICAM1-TBK1-IRF3 axis leading to type I interferon production. In addition to the secretion of proinflammatory cytokines, initiates the activation of NLRP3 inflammasome and formation of a positive feedback loop between autophagy and NF-kappa-B signaling cascade. In complex with TLR6, promotes inflammation in monocytes/macrophages by associating with TLR6 and the receptor CD86. Upon ligand binding, such as oxLDL or amyloid-beta 42, the TLR4:TLR6 complex is internalized and triggers inflammatory response, leading to NF-kappa-B-dependent production of CXCL1, CXCL2 and CCL9 cytokines, via MYD88 signaling pathway, and CCL5 cytokine, via TICAM1 signaling pathway. In myeloid dendritic cells, vesicular stomatitis virus glycoprotein G but not LPS promotes the activation of IRF7, leading to type I IFN production in a CD14-dependent manner. The protein is Toll-like receptor 4 (TLR4) of Boselaphus tragocamelus (Nilgai).